The chain runs to 900 residues: Periodic tryptophan protein 2 (900 aa).

WD repeat units follow at residues G10 to L47, E50 to R89, T91 to L129, N139 to N178, and G185 to D229. The tract at residues M228–E284 is disordered. The segment covering E261–E274 has biased composition (basic and acidic residues). Position 275 is a phosphoserine (S275). Residues S275 to E284 show a composition bias toward acidic residues. 8 WD repeats span residues Q302–L341, I344–K384, G387–T426, E429–T468, P472–I512, G515–E554, R557–T596, and S619–R658. Residues P684–R720 are disordered. Acidic residues predominate over residues L687–G697. The WD 14 repeat unit spans residues R720–T759.

This sequence belongs to the WD repeat PWP2 family. As to quaternary structure, component of the ribosomal small subunit (SSU) processome. Interacts with TBP1 in the nucleus. In terms of tissue distribution, expressed constitutively and ubiquitously; observed in seeds, seedlings, roots, leaves, stems, flowers and siliques.

Its subcellular location is the nucleus. The protein localises to the nucleolus. Involved in nucleolar processing of pre-18S ribosomal RNA. Plays a role early in ribosome biogenesis, especially in the maturation of 5.8S rRNA. Required for guard cell functions. The sequence is that of Periodic tryptophan protein 2 from Arabidopsis thaliana (Mouse-ear cress).